Consider the following 294-residue polypeptide: Pyridoxal 5'-phosphate synthase subunit PdxS (294 aa).

Asp24 contacts D-ribose 5-phosphate. The active-site Schiff-base intermediate with D-ribose 5-phosphate is Lys81. Gly153 lines the D-ribose 5-phosphate pocket. Residue Arg165 coordinates D-glyceraldehyde 3-phosphate. Residues Gly214 and 235–236 contribute to the D-ribose 5-phosphate site; that span reads GS.

The protein belongs to the PdxS/SNZ family. In terms of assembly, in the presence of PdxT, forms a dodecamer of heterodimers.

It catalyses the reaction aldehydo-D-ribose 5-phosphate + D-glyceraldehyde 3-phosphate + L-glutamine = pyridoxal 5'-phosphate + L-glutamate + phosphate + 3 H2O + H(+). The protein operates within cofactor biosynthesis; pyridoxal 5'-phosphate biosynthesis. Its function is as follows. Catalyzes the formation of pyridoxal 5'-phosphate from ribose 5-phosphate (RBP), glyceraldehyde 3-phosphate (G3P) and ammonia. The ammonia is provided by the PdxT subunit. Can also use ribulose 5-phosphate and dihydroxyacetone phosphate as substrates, resulting from enzyme-catalyzed isomerization of RBP and G3P, respectively. The polypeptide is Pyridoxal 5'-phosphate synthase subunit PdxS (Bacillus velezensis (strain DSM 23117 / BGSC 10A6 / LMG 26770 / FZB42) (Bacillus amyloliquefaciens subsp. plantarum)).